The primary structure comprises 395 residues: Zinc finger protein 385D (395 aa).

Residues 80-110 form a Matrin-type 1 zinc finger; sequence ISCNICQLRFNSDSQAAAHYKGTKHAKKLKA. Over residues 169 to 193 the composition is skewed to polar residues; that stretch reads MTTEITSKVEKSPTTATGNSSCPST. Positions 169-194 are disordered; sequence MTTEITSKVEKSPTTATGNSSCPSTE. Matrin-type zinc fingers lie at residues 204-234 and 267-297; these read LYCS…MLEA and FHCE…RAAG. A disordered region spans residues 282-309; sequence LKQHISSRRHKDRAAGKPPKPKYSPYNK.

It localises to the nucleus. The chain is Zinc finger protein 385D (ZNF385D) from Homo sapiens (Human).